The sequence spans 408 residues: Cytochrome bc1 complex Rieske iron-sulfur subunit (408 aa).

Transmembrane regions (helical) follow at residues 56–76, 98–118, and 162–182; these read VTFW…TYIF, MLGI…VLYV, and LIMG…IAPM. The Rieske domain occupies 293–390; that stretch reads HGPRNAVMLI…ITVDEEGYLI (98 aa). [2Fe-2S] cluster-binding residues include cysteine 333, histidine 335, cysteine 352, and histidine 355. Cysteines 338 and 354 form a disulfide.

The protein belongs to the Rieske iron-sulfur protein family. In terms of assembly, the cytochrome bc1 complex is composed of a cytochrome b (QcrB), the Rieske iron-sulfur protein (QcrA) and a diheme cytochrome c (QcrC) subunit. The bc1 complex forms a supercomplex with cytochrome c oxidase (cytochrome aa3). The cofactor is [2Fe-2S] cluster.

It is found in the cell membrane. Functionally, iron-sulfur subunit of the cytochrome bc1 complex, an essential component of the respiratory electron transport chain required for ATP synthesis. The bc1 complex catalyzes the oxidation of menaquinol and the reduction of cytochrome c in the respiratory chain. The bc1 complex operates through a Q-cycle mechanism that couples electron transfer to generation of the proton gradient that drives ATP synthesis. The sequence is that of Cytochrome bc1 complex Rieske iron-sulfur subunit (qcrA) from Corynebacterium glutamicum (strain ATCC 13032 / DSM 20300 / JCM 1318 / BCRC 11384 / CCUG 27702 / LMG 3730 / NBRC 12168 / NCIMB 10025 / NRRL B-2784 / 534).